The sequence spans 242 residues: MQKMPIELKGSNFTFLVLYLNTNNVDLISKSLYKKIQEYPQFFKNVPVIVNVSNLLNQVNWKKIQEIIIEYGFYIVGVSGCKDNYFKKIIVESGLPVLLESNTTNTNKDLRSFYHTSTLKKTKNEQRLRVKKIEKTHIINTPVRSGQKIYAKYSDLVVINNVSAGAELVADGNIHVYGSVRGRVLAGANGDITSKIFCTTLFAELISVSGQYWLSDQIPSHFIGKSAQIYLKNKFLTINSLS.

This sequence belongs to the MinC family. In terms of assembly, interacts with MinD and FtsZ.

In terms of biological role, cell division inhibitor that blocks the formation of polar Z ring septums. Rapidly oscillates between the poles of the cell to destabilize FtsZ filaments that have formed before they mature into polar Z rings. Prevents FtsZ polymerization. The sequence is that of Probable septum site-determining protein MinC from Buchnera aphidicola subsp. Schizaphis graminum (strain Sg).